A 200-amino-acid chain; its full sequence is uncharacterized protein (200 aa).

This is an uncharacterized protein from Haemophilus phage HP1 (strain HP1c1) (Bacteriophage HP1).